Reading from the N-terminus, the 491-residue chain is G2/mitotic-specific cyclin-2 (491 aa).

At Ser2 the chain carries N-acetylserine. Disordered regions lie at residues 59–107 (EGSR…DPSS) and 164–184 (HPAR…SGKK). Residues 67-77 (TRESVSRSTAA) are compositionally biased toward polar residues.

The protein belongs to the cyclin family. Cyclin AB subfamily. In terms of assembly, interacts with NAP1.

In terms of biological role, essential for the control of the cell cycle at the G2/M (mitosis) transition. Interacts with the CDC2 protein kinase to form MPF. G2/M cyclins accumulate steadily during G2 and are abruptly destroyed at mitosis. The protein is G2/mitotic-specific cyclin-2 (CLB2) of Saccharomyces cerevisiae (strain ATCC 204508 / S288c) (Baker's yeast).